We begin with the raw amino-acid sequence, 453 residues long: Bifunctional protein GlmU (453 aa).

Residues 1–225 are pyrophosphorylase; sequence MNIVILAAGT…EWETLGVNSK (225 aa). UDP-N-acetyl-alpha-D-glucosamine-binding positions include 6-9, K20, Q71, 76-77, 98-100, G135, E150, N165, and N223; these read LAAG, GT, and YGD. D100 serves as a coordination point for Mg(2+). Residue N223 participates in Mg(2+) binding. The interval 226–246 is linker; the sequence is AQLAELERIHQRNVADALLVD. Positions 247-453 are N-acetyltransferase; that stretch reads GVTLADPARV…GYVRPVKKKS (207 aa). The UDP-N-acetyl-alpha-D-glucosamine site is built by R329 and K347. H359 functions as the Proton acceptor in the catalytic mechanism. 2 residues coordinate UDP-N-acetyl-alpha-D-glucosamine: Y362 and N373. Acetyl-CoA is bound by residues A376, 382 to 383, S401, and A419; that span reads NY.

The protein in the N-terminal section; belongs to the N-acetylglucosamine-1-phosphate uridyltransferase family. This sequence in the C-terminal section; belongs to the transferase hexapeptide repeat family. As to quaternary structure, homotrimer. The cofactor is Mg(2+).

It is found in the cytoplasm. It carries out the reaction alpha-D-glucosamine 1-phosphate + acetyl-CoA = N-acetyl-alpha-D-glucosamine 1-phosphate + CoA + H(+). The enzyme catalyses N-acetyl-alpha-D-glucosamine 1-phosphate + UTP + H(+) = UDP-N-acetyl-alpha-D-glucosamine + diphosphate. Its pathway is nucleotide-sugar biosynthesis; UDP-N-acetyl-alpha-D-glucosamine biosynthesis; N-acetyl-alpha-D-glucosamine 1-phosphate from alpha-D-glucosamine 6-phosphate (route II): step 2/2. It participates in nucleotide-sugar biosynthesis; UDP-N-acetyl-alpha-D-glucosamine biosynthesis; UDP-N-acetyl-alpha-D-glucosamine from N-acetyl-alpha-D-glucosamine 1-phosphate: step 1/1. The protein operates within bacterial outer membrane biogenesis; LPS lipid A biosynthesis. In terms of biological role, catalyzes the last two sequential reactions in the de novo biosynthetic pathway for UDP-N-acetylglucosamine (UDP-GlcNAc). The C-terminal domain catalyzes the transfer of acetyl group from acetyl coenzyme A to glucosamine-1-phosphate (GlcN-1-P) to produce N-acetylglucosamine-1-phosphate (GlcNAc-1-P), which is converted into UDP-GlcNAc by the transfer of uridine 5-monophosphate (from uridine 5-triphosphate), a reaction catalyzed by the N-terminal domain. In Burkholderia orbicola (strain MC0-3), this protein is Bifunctional protein GlmU.